We begin with the raw amino-acid sequence, 361 residues long: Phospho-N-acetylmuramoyl-pentapeptide-transferase (361 aa).

The next 10 membrane-spanning stretches (helical) occupy residues 28–48 (LAIIITLSLSFITGPILIEFL), 74–94 (TMGGIMIILSSCLSTLLLADL), 99–119 (IWITLFGFISFGIIGFMDDYA), 133–153 (SKLLLQGIISFIICVLLEYLD), 168–188 (LSLDLGYCYIVFAIFVIVGSS), 203–223 (VPIAFTAGSFALISYLVGNLI), 236–256 (TGELTVLCAGLVGSCLGFLWF), 263–283 (VFMGDTGSLSLGGVLGIISVI), 288–308 (IVLAIVGGLFVIETASVILQV), and 338–358 (KVVIRFWIISVIFALIGLSSL).

This sequence belongs to the glycosyltransferase 4 family. MraY subfamily. Requires Mg(2+) as cofactor.

Its subcellular location is the cell inner membrane. It carries out the reaction UDP-N-acetyl-alpha-D-muramoyl-L-alanyl-gamma-D-glutamyl-meso-2,6-diaminopimeloyl-D-alanyl-D-alanine + di-trans,octa-cis-undecaprenyl phosphate = di-trans,octa-cis-undecaprenyl diphospho-N-acetyl-alpha-D-muramoyl-L-alanyl-D-glutamyl-meso-2,6-diaminopimeloyl-D-alanyl-D-alanine + UMP. It functions in the pathway cell wall biogenesis; peptidoglycan biosynthesis. In terms of biological role, catalyzes the initial step of the lipid cycle reactions in the biosynthesis of the cell wall peptidoglycan: transfers peptidoglycan precursor phospho-MurNAc-pentapeptide from UDP-MurNAc-pentapeptide onto the lipid carrier undecaprenyl phosphate, yielding undecaprenyl-pyrophosphoryl-MurNAc-pentapeptide, known as lipid I. This is Phospho-N-acetylmuramoyl-pentapeptide-transferase from Rickettsia africae (strain ESF-5).